Here is a 196-residue protein sequence, read N- to C-terminus: Cell division protein SepF (196 aa).

The interval 16–81 (EDDEEFNEPA…KRAGSTFTKP (66 aa)) is disordered. A compositionally biased stretch (polar residues) spans 56–69 (RPAQSTSKAQTQTA).

The protein belongs to the SepF family. Homodimer. Interacts with FtsZ.

The protein resides in the cytoplasm. Functionally, cell division protein that is part of the divisome complex and is recruited early to the Z-ring. Probably stimulates Z-ring formation, perhaps through the cross-linking of FtsZ protofilaments. Its function overlaps with FtsA. The chain is Cell division protein SepF from Lactococcus lactis subsp. lactis (strain IL1403) (Streptococcus lactis).